The chain runs to 129 residues: Glycine cleavage system H protein (129 aa).

The 83-residue stretch at 24–106 (LLKIGVSEFA…IGEGWLVILK (83 aa)) folds into the Lipoyl-binding domain. An N6-lipoyllysine modification is found at Lys-65.

This sequence belongs to the GcvH family. In terms of assembly, the glycine cleavage system is composed of four proteins: P, T, L and H. The cofactor is (R)-lipoate.

Its function is as follows. The glycine cleavage system catalyzes the degradation of glycine. The H protein shuttles the methylamine group of glycine from the P protein to the T protein. The polypeptide is Glycine cleavage system H protein (Prochlorococcus marinus (strain MIT 9215)).